Here is a 416-residue protein sequence, read N- to C-terminus: Serine hydroxymethyltransferase (416 aa).

(6S)-5,6,7,8-tetrahydrofolate contacts are provided by residues leucine 121 and 125–127 (GHL). Lysine 229 is subject to N6-(pyridoxal phosphate)lysine. 354–356 (SPF) is a binding site for (6S)-5,6,7,8-tetrahydrofolate.

It belongs to the SHMT family. As to quaternary structure, homodimer. It depends on pyridoxal 5'-phosphate as a cofactor.

The protein localises to the cytoplasm. The catalysed reaction is (6R)-5,10-methylene-5,6,7,8-tetrahydrofolate + glycine + H2O = (6S)-5,6,7,8-tetrahydrofolate + L-serine. The protein operates within one-carbon metabolism; tetrahydrofolate interconversion. Its pathway is amino-acid biosynthesis; glycine biosynthesis; glycine from L-serine: step 1/1. Catalyzes the reversible interconversion of serine and glycine with tetrahydrofolate (THF) serving as the one-carbon carrier. This reaction serves as the major source of one-carbon groups required for the biosynthesis of purines, thymidylate, methionine, and other important biomolecules. Also exhibits THF-independent aldolase activity toward beta-hydroxyamino acids, producing glycine and aldehydes, via a retro-aldol mechanism. The chain is Serine hydroxymethyltransferase from Halorhodospira halophila (strain DSM 244 / SL1) (Ectothiorhodospira halophila (strain DSM 244 / SL1)).